Consider the following 351-residue polypeptide: Histidinol-phosphate aminotransferase 2 (351 aa).

The residue at position 210 (lysine 210) is an N6-(pyridoxal phosphate)lysine.

It belongs to the class-II pyridoxal-phosphate-dependent aminotransferase family. Histidinol-phosphate aminotransferase subfamily. Homodimer. The cofactor is pyridoxal 5'-phosphate.

The enzyme catalyses L-histidinol phosphate + 2-oxoglutarate = 3-(imidazol-4-yl)-2-oxopropyl phosphate + L-glutamate. It participates in amino-acid biosynthesis; L-histidine biosynthesis; L-histidine from 5-phospho-alpha-D-ribose 1-diphosphate: step 7/9. The protein is Histidinol-phosphate aminotransferase 2 (hisC2) of Rhizobium meliloti (strain 1021) (Ensifer meliloti).